The sequence spans 385 residues: Putative transport protein MT1133 (385 aa).

8 helical membrane-spanning segments follow: residues 7-27, 32-52, 66-86, 159-179, 218-238, 241-261, 263-283, and 319-339; these read LTQK…GAYF, FVLI…FKWF, LLSA…LAIV, SLAG…ALLV, FVIA…AGFH, FFIF…GGIV, IPFG…FVLL, and GITM…ILIV.

The protein belongs to the autoinducer-2 exporter (AI-2E) (TC 2.A.86) family.

Its subcellular location is the cell membrane. The chain is Putative transport protein MT1133 from Mycobacterium tuberculosis (strain CDC 1551 / Oshkosh).